We begin with the raw amino-acid sequence, 852 residues long: Protein SBE22 (852 aa).

Residues methionine 1–proline 158 are disordered. Over residues serine 15 to serine 26 the composition is skewed to basic and acidic residues. Residues proline 43 to lysine 61 show a composition bias toward polar residues. A Phosphoserine modification is found at serine 72. A compositionally biased stretch (polar residues) spans asparagine 74 to asparagine 96. The segment covering threonine 124–aspartate 139 has biased composition (low complexity). Phosphoserine is present on serine 201. The interval alanine 206–threonine 248 is disordered. Residues serine 224–lysine 235 are compositionally biased toward low complexity. Phosphoserine occurs at positions 459, 517, and 520.

This sequence belongs to the SBE2 family.

It is found in the cytoplasm. Its subcellular location is the golgi apparatus. Its function is as follows. With SBE2, is involved in cell wall integrity and polarity processes like bud growth, through the transport of CHS3 and UTR2 to sites of growth. This Saccharomyces cerevisiae (strain YJM789) (Baker's yeast) protein is Protein SBE22 (SBE22).